Reading from the N-terminus, the 69-residue chain is Large ribosomal subunit protein bL31 (69 aa).

Residues Cys-16, Cys-18, Cys-37, and Cys-40 each coordinate Zn(2+).

It belongs to the bacterial ribosomal protein bL31 family. Type A subfamily. Part of the 50S ribosomal subunit. The cofactor is Zn(2+).

Binds the 23S rRNA. The polypeptide is Large ribosomal subunit protein bL31 (Buchnera aphidicola subsp. Baizongia pistaciae (strain Bp)).